An 86-amino-acid chain; its full sequence is Large ribosomal subunit protein bL31B (86 aa).

It belongs to the bacterial ribosomal protein bL31 family. Type B subfamily. As to quaternary structure, part of the 50S ribosomal subunit.

The protein is Large ribosomal subunit protein bL31B of Streptococcus agalactiae serotype Ia (strain ATCC 27591 / A909 / CDC SS700).